The chain runs to 461 residues: Photosystem II CP43 reaction center protein (461 aa).

The Cytoplasmic portion of the chain corresponds to 1 to 48; it reads MVTLSSNSIFATNRDQESSGFAWWAGNARLINLSGKLLGAHVAHAGLI. A helical transmembrane segment spans residues 49–71; sequence VFWAGAMTLFELAHFIPEKPMYE. Residues 72-111 lie on the Lumenal side of the membrane; the sequence is QGLILIPHIATLGWGVGPGGEVVDTFPFFVVGVVHLISSA. The chain crosses the membrane as a helical span at residues 112 to 133; the sequence is VLGFGGVYHAIRGPETLEEYSS. Residues 134–155 are Cytoplasmic-facing; the sequence is FFGYDWKDKNKMTTILGFHLIV. A helical membrane pass occupies residues 156-178; that stretch reads LGIGALLLVAKAMFFGGLYDTWA. Residues 179–232 lie on the Lumenal side of the membrane; that stretch reads PGGGDVRVITNPTLDPRVIFGYLLKSPFGGEGWIVSVNNLEDVVGGHIWIGLIC. Residues 233 to 253 form a helical membrane-spanning segment; it reads IAGGIWHILTTPFGWARRAFI. The Cytoplasmic segment spans residues 254-268; the sequence is WSGEAYLSYSLGALS. A helical transmembrane segment spans residues 269–289; it reads MMGFIATCFVWFNNTVYPSEF. Residues 290–424 are Lumenal-facing; sequence YGPTGPEASQ…ATSHFVLAFF (135 aa). Glutamate 355 provides a ligand contact to [CaMn4O5] cluster. The helical transmembrane segment at 425–449 threads the bilayer; that stretch reads FLVGHLWHAGRARAAAAGFEKGIDR. Residues 450 to 461 are Cytoplasmic-facing; it reads ESEPVLSMPSLD.

In terms of assembly, PSII is composed of 1 copy each of membrane proteins PsbA, PsbB, PsbC, PsbD, PsbE, PsbF, PsbH, PsbI, PsbJ, PsbK, PsbL, PsbM, PsbT, PsbX, PsbY, PsbZ, Psb30/Ycf12, peripheral proteins PsbO, CyanoQ (PsbQ), PsbU, PsbV and a large number of cofactors. It forms dimeric complexes. Part of a photosystem II (PSII) assembly intermediate complex PSII-I; crystallized from a strain deleted of psbJ, it forms monomeric PSII before addition of the oxygen evolving complex. PSII-I includes 3 assembly factors not found in mature PSII (Psb27, Psb28 and Psb34), and CP43 (this protein) is not in its mature conformation. Binds multiple chlorophylls and provides some of the ligands for the Ca-4Mn-5O cluster of the oxygen-evolving complex. It may also provide a ligand for a Cl- that is required for oxygen evolution. PSII binds additional chlorophylls, carotenoids and specific lipids. serves as cofactor.

The protein localises to the cellular thylakoid membrane. In terms of biological role, one of the components of the core complex of photosystem II (PSII). It binds chlorophyll and helps catalyze the primary light-induced photochemical processes of PSII. PSII is a light-driven water:plastoquinone oxidoreductase, using light energy to abstract electrons from H(2)O, generating O(2) and a proton gradient subsequently used for ATP formation. In Thermosynechococcus vestitus (strain NIES-2133 / IAM M-273 / BP-1), this protein is Photosystem II CP43 reaction center protein.